Here is a 121-residue protein sequence, read N- to C-terminus: Fluoride-specific ion channel FluC 1 (121 aa).

4 helical membrane passes run 3 to 23 (YVYI…ISFL), 35 to 55 (IANL…IAFF), 64 to 84 (AITT…LELI), and 92 to 112 (FITL…LCYV). Na(+) is bound by residues Gly-71 and Thr-74.

Belongs to the fluoride channel Fluc/FEX (TC 1.A.43) family.

The protein localises to the cell membrane. The catalysed reaction is fluoride(in) = fluoride(out). With respect to regulation, na(+) is not transported, but it plays an essential structural role and its presence is essential for fluoride channel function. Functionally, fluoride-specific ion channel. Important for reducing fluoride concentration in the cell, thus reducing its toxicity. The polypeptide is Fluoride-specific ion channel FluC 1 (Staphylococcus aureus (strain NCTC 8325 / PS 47)).